The chain runs to 288 residues: 4-diphosphocytidyl-2-C-methyl-D-erythritol kinase (288 aa).

The active site involves K11. 95–105 lines the ATP pocket; sequence PVAAGMAGGSS. D137 is an active-site residue.

The protein belongs to the GHMP kinase family. IspE subfamily.

The enzyme catalyses 4-CDP-2-C-methyl-D-erythritol + ATP = 4-CDP-2-C-methyl-D-erythritol 2-phosphate + ADP + H(+). Its pathway is isoprenoid biosynthesis; isopentenyl diphosphate biosynthesis via DXP pathway; isopentenyl diphosphate from 1-deoxy-D-xylulose 5-phosphate: step 3/6. Functionally, catalyzes the phosphorylation of the position 2 hydroxy group of 4-diphosphocytidyl-2C-methyl-D-erythritol. The protein is 4-diphosphocytidyl-2-C-methyl-D-erythritol kinase of Lachnospira eligens (strain ATCC 27750 / DSM 3376 / VPI C15-48 / C15-B4) (Eubacterium eligens).